Consider the following 178-residue polypeptide: PRA1 family protein 2 (178 aa).

Residues 1–41 (MSEVRLPPLRALDDFVLGSARLAAPDPCDPQRWCHRVINNL) are Cytoplasmic-facing. A helical membrane pass occupies residues 42–62 (LYYQTNYLLCFGIGLALAGYV). The Extracellular portion of the chain corresponds to 63-64 (RP). The chain crosses the membrane as a helical span at residues 65-85 (LHTLLSALVVAVALGVLVWAA). Topologically, residues 86-96 (ETRAAVRRCRR) are cytoplasmic. Residues 97 to 119 (SHPAACLAAVLAVGLLVLWVAGG) traverse the membrane as a helical segment. Residues 120–122 (ACT) lie on the Extracellular side of the membrane. The helical transmembrane segment at 123–140 (FLFSIAGPVLLILVHASL) threads the bilayer. The Cytoplasmic portion of the chain corresponds to 141–178 (RLRNLKNKIENKIESIGLKRTPMGLLLEALGQEQEAGS).

Belongs to the PRA1 family. In terms of assembly, interacts with CCR5 and GDE1. Strong expression in the brain, small intestine, lung, spleen, and pancreas as well as in tumor tissues of the breast, colon, lung and ovary, with a weaker expression in normal tissues of the same patient. High expression in neuroblastic tumors. Strongly expressed in Purkinje cells and more moderately in cells of the molecular and the granular layers in the cerebellum. Detected in neuronal cells, but not in non-neuronal cells in the cerebral cortex, hippocampus, and lateral ventricles.

The protein localises to the endosome membrane. Its function is as follows. May be involved in ER/Golgi transport and vesicular traffic. Plays a proapoptotic role in cerulenin-induced neuroblastoma apoptosis. In Homo sapiens (Human), this protein is PRA1 family protein 2 (PRAF2).